The sequence spans 406 residues: Cysteine desulfurase (406 aa).

Position 226 is an N6-(pyridoxal phosphate)lysine (lysine 226). The active-site Cysteine persulfide intermediate is the cysteine 364.

The protein belongs to the class-V pyridoxal-phosphate-dependent aminotransferase family. Csd subfamily. As to quaternary structure, homodimer. Interacts with SufE and the SufBCD complex composed of SufB, SufC and SufD. The interaction with SufE is required to mediate the direct transfer of the sulfur atom from the S-sulfanylcysteine. Requires pyridoxal 5'-phosphate as cofactor.

The protein resides in the cytoplasm. It carries out the reaction (sulfur carrier)-H + L-cysteine = (sulfur carrier)-SH + L-alanine. The catalysed reaction is L-selenocysteine + AH2 = hydrogenselenide + L-alanine + A + H(+). It functions in the pathway cofactor biosynthesis; iron-sulfur cluster biosynthesis. In terms of biological role, cysteine desulfurases mobilize the sulfur from L-cysteine to yield L-alanine, an essential step in sulfur metabolism for biosynthesis of a variety of sulfur-containing biomolecules. Component of the suf operon, which is activated and required under specific conditions such as oxidative stress and iron limitation. Acts as a potent selenocysteine lyase in vitro, that mobilizes selenium from L-selenocysteine. Selenocysteine lyase activity is however unsure in vivo. In Escherichia coli (strain SE11), this protein is Cysteine desulfurase.